An 81-amino-acid chain; its full sequence is WDKDIMLIRLNKPVSYSEHIAPLSLPSSPPIVGSVCRPHCANINLLDYEVCRTAHPQFRLPATSRILCAGVLEGGIDTCHR.

Asp-4 is a catalytic residue. Cys-51 and Cys-68 form a disulfide bridge.

As to quaternary structure, monomer. As to expression, expressed by the vanom gland.

It is found in the secreted. Thrombin-like snake venom serine protease. The sequence is that of Thrombin-like enzyme collinein-3 from Crotalus durissus collilineatus (Brazilian rattlesnake).